Consider the following 370-residue polypeptide: 2-Hydroxyacid oxidase 1 (370 aa).

One can recognise an FMN hydroxy acid dehydrogenase domain in the interval 1-365; that stretch reads MLPRLVCISD…DKTLVRKNPL (365 aa). Glyoxylate is bound at residue tyrosine 26. FMN contacts are provided by residues 79 to 81, serine 108, and glutamine 130; that span reads ATA. Residue tyrosine 132 coordinates glyoxylate. Threonine 158 provides a ligand contact to FMN. Arginine 167 serves as a coordination point for glyoxylate. Lysine 184 bears the N6-succinyllysine mark. Serine 194 and serine 230 each carry phosphoserine. The FMN site is built by lysine 236 and serine 258. Histidine 260 and arginine 263 together coordinate glyoxylate. Histidine 260 serves as the catalytic Proton acceptor. Residues 291-295 and 314-315 contribute to the FMN site; these read DGGVR and GR. The short motif at 368-370 is the Microbody targeting signal element; it reads SKI.

Belongs to the FMN-dependent alpha-hydroxy acid dehydrogenase family. In terms of assembly, homotetramer. FMN is required as a cofactor. In terms of tissue distribution, liver.

Its subcellular location is the peroxisome matrix. It catalyses the reaction a (2S)-2-hydroxycarboxylate + O2 = a 2-oxocarboxylate + H2O2. The catalysed reaction is glycolate + O2 = glyoxylate + H2O2. The enzyme catalyses glyoxylate + O2 + H2O = oxalate + H2O2 + H(+). It carries out the reaction 2-hydroxyhexadecanoate + O2 = 2-oxohexadecanoate + H2O2. It catalyses the reaction 2-hydroxyoctanoate + O2 = 2-oxooctanoate + H2O2. It functions in the pathway amino-acid biosynthesis; glycine biosynthesis. In terms of biological role, broad substrate specificity (S)-2-hydroxy-acid oxidase that preferentially oxidizes glycolate. The glyoxylate produced by the oxidation of glycolate can then be utilized by alanine-glyoxylate aminotransferase for the peroxisomal synthesis of glycine; this pathway appears to be an important step for the detoxification of glyoxylate which, if allowed to accumulate, may be metabolized to oxalate with formation of kidney stones. Can also catalyze the oxidation glyoxylate, and long chain hydroxyacids such as 2-hydroxyhexadecanoate and 2-hydroxyoctanoate. Active in vitro with the artificial electron acceptor 2,6-dichlorophenolindophenol (DCIP), but O2 is believed to be the physiological electron acceptor, leading to the production of H2O2. This Mus musculus (Mouse) protein is 2-Hydroxyacid oxidase 1.